We begin with the raw amino-acid sequence, 550 residues long: Hydroxylamine reductase (550 aa).

Cys-3, Cys-6, Cys-18, and Cys-25 together coordinate [2Fe-2S] cluster. Positions 249, 273, 317, 405, 433, 458, 492, and 494 each coordinate hybrid [4Fe-2O-2S] cluster. Cys-405 is modified (cysteine persulfide).

This sequence belongs to the HCP family. [2Fe-2S] cluster serves as cofactor. Requires hybrid [4Fe-2O-2S] cluster as cofactor.

The protein resides in the cytoplasm. It catalyses the reaction A + NH4(+) + H2O = hydroxylamine + AH2 + H(+). Its function is as follows. Catalyzes the reduction of hydroxylamine to form NH(3) and H(2)O. The chain is Hydroxylamine reductase from Enterobacter sp. (strain 638).